A 218-amino-acid polypeptide reads, in one-letter code: MGTPSDRVPLAERVEELLAVGGPLPIVAAGDPVLRRAAEPYDGQVAPALFERFVEALRLTMHAAPGVGLAAPQVGVGLRVAVIEDPAPVPDEVRVARGRVPQPFRVLVNPSYEPAGAGRAAFFEGCLSVPGWQAVVARHAEVRLRAHDEHGRAVDEVFAGWPARIVQHETDHLDGTLYLDRAELRSLASNAAMAELWSQPTPRRAASALGFELPGPAA.

Cys126 and His168 together coordinate Fe cation. Glu169 is a catalytic residue. Position 172 (His172) interacts with Fe cation.

The protein belongs to the polypeptide deformylase family. Requires Fe(2+) as cofactor.

It catalyses the reaction N-terminal N-formyl-L-methionyl-[peptide] + H2O = N-terminal L-methionyl-[peptide] + formate. Functionally, removes the formyl group from the N-terminal Met of newly synthesized proteins. Requires at least a dipeptide for an efficient rate of reaction. N-terminal L-methionine is a prerequisite for activity but the enzyme has broad specificity at other positions. The sequence is that of Peptide deformylase 1 from Streptomyces coelicolor (strain ATCC BAA-471 / A3(2) / M145).